A 552-amino-acid polypeptide reads, in one-letter code: 4-coumarate--CoA ligase-like 3 (552 aa).

ATP contacts are provided by serine 207, serine 208, glycine 209, threonine 210, threonine 211, and lysine 215. A (E)-4-coumaroyl-AMP-binding site is contributed by phenylalanine 252. Arginine 273 serves as a coordination point for CoA. The tract at residues glycine 275–glutamine 346 is SBD1. (E)-4-coumaroyl-AMP contacts are provided by glycine 324, glutamine 346, glycine 347, and threonine 351. Residues glutamine 346, glycine 347, threonine 351, aspartate 432, and arginine 447 each contribute to the ATP site. The segment at glycine 347–tyrosine 411 is SBD2. (E)-4-coumaroyl-AMP is bound by residues lysine 449 and lysine 453. Residues lysine 455 and glycine 456 each contribute to the CoA site. Lysine 538 is an ATP binding site. The Microbody targeting signal motif lies at serine 550–leucine 552.

Belongs to the ATP-dependent AMP-binding enzyme family. Requires Mg(2+) as cofactor.

It is found in the peroxisome. The enzyme catalyses (E)-4-coumarate + ATP + CoA = (E)-4-coumaroyl-CoA + AMP + diphosphate. It carries out the reaction (E)-4-coumarate + ATP + H(+) = (E)-4-coumaroyl-AMP + diphosphate. It catalyses the reaction (E)-4-coumaroyl-AMP + CoA = (E)-4-coumaroyl-CoA + AMP + H(+). Its function is as follows. Carboxylate--CoA ligase that may use 4-coumarate as substrate. Follows a two-step reaction mechanism, wherein the carboxylate substrate first undergoes adenylation by ATP, followed by a thioesterification in the presence of CoA to yield the final CoA thioester. The polypeptide is 4-coumarate--CoA ligase-like 3 (Arabidopsis thaliana (Mouse-ear cress)).